The chain runs to 502 residues: mRNA cap guanine-N(7) methyltransferase (502 aa).

The tract at residues 1–118 (MADENPQAQG…SQQEEAMRFS (118 aa)) is disordered. Residues 93-115 (LVDRETLRRRQEERERSQQEEAM) are compositionally biased toward basic and acidic residues. The 357-residue stretch at 146 to 502 (SKIKGLRSFN…FYHAFCFYKV (357 aa)) folds into the mRNA cap 0 methyltransferase domain. 155–156 (NN) is an mRNA binding site. Residues lysine 159, glycine 202, aspartate 226, aspartate 264, 307-309 (MFT), and tyrosine 312 contribute to the S-adenosyl-L-methionine site. A compositionally biased stretch (basic and acidic residues) spans 360 to 369 (ERETAAKKEE). Positions 360 to 381 (ERETAAKKEEAEPEDGEVEEDD) are disordered. The span at 370–381 (AEPEDGEVEEDD) shows a compositional bias: acidic residues.

The protein belongs to the class I-like SAM-binding methyltransferase superfamily. mRNA cap 0 methyltransferase family.

It localises to the nucleus. It catalyses the reaction a 5'-end (5'-triphosphoguanosine)-ribonucleoside in mRNA + S-adenosyl-L-methionine = a 5'-end (N(7)-methyl 5'-triphosphoguanosine)-ribonucleoside in mRNA + S-adenosyl-L-homocysteine. Its function is as follows. Responsible for methylating the 5'-cap structure of mRNAs. This is mRNA cap guanine-N(7) methyltransferase (abd1) from Aspergillus oryzae (strain ATCC 42149 / RIB 40) (Yellow koji mold).